We begin with the raw amino-acid sequence, 217 residues long: Ras-related protein Rab-19 (217 aa).

GTP is bound by residues Ser-26, Val-28, Gly-29, Lys-30, Thr-31, Cys-32, Tyr-42, Thr-43, Glu-44, Thr-45, and Thr-49. Residue Thr-31 coordinates Mg(2+). The Switch 1 signature appears at Ser-39–Phe-54. Residues Thr-49 and Asp-72 each contribute to the Mg(2+) site. A Switch 2 motif is present at residues Ala-74–Ser-89. GTP contacts are provided by Gly-75, Asn-130, Lys-131, Asp-133, Ser-161, Ala-162, and Lys-163. S-geranylgeranyl cysteine attachment occurs at residues Cys-215 and Cys-217. Cys-217 is modified (cysteine methyl ester).

Belongs to the small GTPase superfamily. Rab family. The cofactor is Mg(2+).

The protein resides in the cell membrane. It catalyses the reaction GTP + H2O = GDP + phosphate + H(+). With respect to regulation, regulated by guanine nucleotide exchange factors (GEFs) which promote the exchange of bound GDP for free GTP. Regulated by GTPase activating proteins (GAPs) which increase the GTP hydrolysis activity. Inhibited by GDP dissociation inhibitors (GDIs). In terms of biological role, the small GTPases Rab are key regulators of intracellular membrane trafficking, from the formation of transport vesicles to their fusion with membranes. Rabs cycle between an inactive GDP-bound form and an active GTP-bound form that is able to recruit to membranes different set of downstream effectors directly responsible for vesicle formation, movement, tethering and fusion. The sequence is that of Ras-related protein Rab-19 from Homo sapiens (Human).